We begin with the raw amino-acid sequence, 148 residues long: Flavodoxin (148 aa).

In terms of domain architecture, Flavodoxin-like spans 4–145 (VLILFGSSTG…AVSAFAEDVL (142 aa)).

This sequence belongs to the flavodoxin family. The cofactor is FMN.

Low-potential electron donor to a number of redox enzymes. The chain is Flavodoxin from Desulfovibrio desulfuricans (strain ATCC 27774 / DSM 6949 / MB).